The sequence spans 296 residues: Probable endonuclease 4 (296 aa).

Positions 68, 109, 144, 178, 181, 213, 226, 228, and 258 each coordinate Zn(2+).

The protein belongs to the AP endonuclease 2 family. Requires Zn(2+) as cofactor.

The enzyme catalyses Endonucleolytic cleavage to 5'-phosphooligonucleotide end-products.. Functionally, endonuclease IV plays a role in DNA repair. It cleaves phosphodiester bonds at apurinic or apyrimidinic (AP) sites, generating a 3'-hydroxyl group and a 5'-terminal sugar phosphate. In Staphylococcus aureus (strain Mu3 / ATCC 700698), this protein is Probable endonuclease 4.